The sequence spans 112 residues: Large ribosomal subunit protein bL17 (112 aa).

The protein belongs to the bacterial ribosomal protein bL17 family. As to quaternary structure, part of the 50S ribosomal subunit. Contacts protein L32.

The polypeptide is Large ribosomal subunit protein bL17 (Desulforudis audaxviator (strain MP104C)).